The primary structure comprises 310 residues: Ribosomal RNA small subunit methyltransferase H (310 aa).

S-adenosyl-L-methionine is bound by residues 33-35 (AGH), aspartate 53, tyrosine 83, aspartate 100, and glutamine 107.

Belongs to the methyltransferase superfamily. RsmH family.

Its subcellular location is the cytoplasm. It catalyses the reaction cytidine(1402) in 16S rRNA + S-adenosyl-L-methionine = N(4)-methylcytidine(1402) in 16S rRNA + S-adenosyl-L-homocysteine + H(+). Functionally, specifically methylates the N4 position of cytidine in position 1402 (C1402) of 16S rRNA. This chain is Ribosomal RNA small subunit methyltransferase H, found in Clostridium perfringens (strain ATCC 13124 / DSM 756 / JCM 1290 / NCIMB 6125 / NCTC 8237 / Type A).